The following is a 588-amino-acid chain: Intracellular maltogenic amylase (588 aa).

Ca(2+) is bound by residues Asn-149, Ser-155, Gly-174, and Asp-176. The substrate site is built by His-249 and Arg-325. Catalysis depends on Asp-327, which acts as the Nucleophile. The Proton donor role is filled by Glu-356. Substrate is bound by residues 422–423 (HD), Asp-467, and Arg-471.

The protein belongs to the glycosyl hydrolase 13 family. BbmA subfamily. In terms of assembly, monomer or homodimer; in equilibrium. It depends on Ca(2+) as a cofactor.

The protein localises to the cytoplasm. Its function is as follows. Hydrolyzes beta-cyclodextrin to maltose and glucose, soluble starch to maltose and glucose, and pullulan to panose with trace amounts of maltose and glucose. It is also able to hydrolyze acarbose. Can also exhibit a transglycosylation activity transferring glucose or maltose to another moiety of sugars by forming alpha-(1,6)- and alpha-(1,3)-glycosidic linkages upon the hydrolysis of substrate at concentrations of 5% or higher. This is Intracellular maltogenic amylase (bbmA) from Bacillus subtilis.